The sequence spans 289 residues: Pteridine reductase 1 (289 aa).

14–41 lines the NADP(+) pocket; it reads GAAKRLGSSIAEALHAEGYTVCLHYHRS. Ser176 serves as a coordination point for substrate. The active-site Proton acceptor is the Tyr195. 195–199 is an NADP(+) binding site; the sequence is YTMAK.

It belongs to the short-chain dehydrogenases/reductases (SDR) family. In terms of assembly, homotetramer.

It catalyses the reaction (6R)-L-erythro-5,6,7,8-tetrahydrobiopterin + 2 NADP(+) = L-erythro-biopterin + 2 NADPH + 2 H(+). It participates in cofactor biosynthesis; tetrahydrobiopterin biosynthesis; tetrahydrobiopterin from biopterin: step 1/1. Its function is as follows. Exhibits a NADPH-dependent biopterin reductase activity. Has good activity with folate and significant activity with dihydrofolate and dihydrobiopterin, but not with quinonoid dihydrobiopterin. Confers resistance to methotrexate (MTX). The sequence is that of Pteridine reductase 1 (PTR1) from Leishmania tarentolae (Sauroleishmania tarentolae).